Here is a 132-residue protein sequence, read N- to C-terminus: Small ribosomal subunit protein uS8c (132 aa).

The protein belongs to the universal ribosomal protein uS8 family. Part of the 30S ribosomal subunit.

It is found in the plastid. Its subcellular location is the chloroplast. In terms of biological role, one of the primary rRNA binding proteins, it binds directly to 16S rRNA central domain where it helps coordinate assembly of the platform of the 30S subunit. The polypeptide is Small ribosomal subunit protein uS8c (rps8) (Staurastrum punctulatum (Green alga)).